We begin with the raw amino-acid sequence, 274 residues long: 2-dehydro-3-deoxyphosphooctonate aldolase (274 aa).

Belongs to the KdsA family.

It localises to the cytoplasm. The catalysed reaction is D-arabinose 5-phosphate + phosphoenolpyruvate + H2O = 3-deoxy-alpha-D-manno-2-octulosonate-8-phosphate + phosphate. The protein operates within carbohydrate biosynthesis; 3-deoxy-D-manno-octulosonate biosynthesis; 3-deoxy-D-manno-octulosonate from D-ribulose 5-phosphate: step 2/3. It functions in the pathway bacterial outer membrane biogenesis; lipopolysaccharide biosynthesis. The chain is 2-dehydro-3-deoxyphosphooctonate aldolase from Legionella pneumophila (strain Corby).